We begin with the raw amino-acid sequence, 370 residues long: Anhydro-N-acetylmuramic acid kinase (370 aa).

Position 12–19 (Gly-12–Asp-19) interacts with ATP.

It belongs to the anhydro-N-acetylmuramic acid kinase family.

It carries out the reaction 1,6-anhydro-N-acetyl-beta-muramate + ATP + H2O = N-acetyl-D-muramate 6-phosphate + ADP + H(+). It functions in the pathway amino-sugar metabolism; 1,6-anhydro-N-acetylmuramate degradation. It participates in cell wall biogenesis; peptidoglycan recycling. In terms of biological role, catalyzes the specific phosphorylation of 1,6-anhydro-N-acetylmuramic acid (anhMurNAc) with the simultaneous cleavage of the 1,6-anhydro ring, generating MurNAc-6-P. Is required for the utilization of anhMurNAc either imported from the medium or derived from its own cell wall murein, and thus plays a role in cell wall recycling. The sequence is that of Anhydro-N-acetylmuramic acid kinase from Pectobacterium atrosepticum (strain SCRI 1043 / ATCC BAA-672) (Erwinia carotovora subsp. atroseptica).